Consider the following 377-residue polypeptide: MKIALIATEKLPVPSVRGGAIQIYLEAVAPLIAKKHEVTVFSIKDPNLADREKVDGVHYVHLDEDRYEEAVGAELKKSRFDLVHVCNRPSWVPKLKKQAPDAVFILSVHNEMFAYDKISQAEGEICIDSVAQIVTVSDYIGQTITSRFPSARSKTKTVYSGVDLKTYHPRWTNEGQRAREEMRSELGLHGKKIVLFVGRLSKVKGPHILLQALPDIIEEHPDVMMVFIGSKWFGDNELNNYVKHLHTLGAMQKDHVTFIQFVKPKDIPRLYTMSDVFVCSSQWQEPLARVHYEAMAAGLPIITSNRGGNPEVIEEGKNGYIIHDFENPKQYAERINDLLSSSEKRERLGKYSRREAESNFGWQRVAENLLSVYEKNR.

It belongs to the glycosyltransferase group 1 family. Glycosyltransferase 4 subfamily.

The chain is Spore coat protein SA (cotSA) from Bacillus subtilis (strain 168).